A 198-amino-acid polypeptide reads, in one-letter code: Pyridoxal 5'-phosphate synthase subunit PdxT (198 aa).

L-glutamine is bound at residue glycine 52–serine 54. Cysteine 84 functions as the Nucleophile in the catalytic mechanism. Residues arginine 116 and isoleucine 143–arginine 144 contribute to the L-glutamine site. Catalysis depends on charge relay system residues histidine 179 and glutamate 181.

It belongs to the glutaminase PdxT/SNO family. In terms of assembly, in the presence of PdxS, forms a dodecamer of heterodimers. Only shows activity in the heterodimer.

The enzyme catalyses aldehydo-D-ribose 5-phosphate + D-glyceraldehyde 3-phosphate + L-glutamine = pyridoxal 5'-phosphate + L-glutamate + phosphate + 3 H2O + H(+). It carries out the reaction L-glutamine + H2O = L-glutamate + NH4(+). The protein operates within cofactor biosynthesis; pyridoxal 5'-phosphate biosynthesis. Functionally, catalyzes the hydrolysis of glutamine to glutamate and ammonia as part of the biosynthesis of pyridoxal 5'-phosphate. The resulting ammonia molecule is channeled to the active site of PdxS. In Caldivirga maquilingensis (strain ATCC 700844 / DSM 13496 / JCM 10307 / IC-167), this protein is Pyridoxal 5'-phosphate synthase subunit PdxT.